The following is a 344-amino-acid chain: DNA-directed RNA polymerase subunit alpha (344 aa).

The tract at residues 1-246 (MPVEKFLKDF…EFLFPLIDFE (246 aa)) is alpha N-terminal domain (alpha-NTD). The segment at 259-344 (ESSNLLDMSI…VLSKNVKISE (86 aa)) is alpha C-terminal domain (alpha-CTD).

It belongs to the RNA polymerase alpha chain family. Homodimer. The RNAP catalytic core consists of 2 alpha, 1 beta, 1 beta' and 1 omega subunit. When a sigma factor is associated with the core the holoenzyme is formed, which can initiate transcription.

The enzyme catalyses RNA(n) + a ribonucleoside 5'-triphosphate = RNA(n+1) + diphosphate. DNA-dependent RNA polymerase catalyzes the transcription of DNA into RNA using the four ribonucleoside triphosphates as substrates. The polypeptide is DNA-directed RNA polymerase subunit alpha (Borrelia garinii subsp. bavariensis (strain ATCC BAA-2496 / DSM 23469 / PBi) (Borreliella bavariensis)).